We begin with the raw amino-acid sequence, 245 residues long: 1-(5-phosphoribosyl)-5-[(5-phosphoribosylamino)methylideneamino] imidazole-4-carboxamide isomerase (245 aa).

Aspartate 7 serves as the catalytic Proton acceptor. The active-site Proton donor is aspartate 129.

This sequence belongs to the HisA/HisF family.

It is found in the cytoplasm. It catalyses the reaction 1-(5-phospho-beta-D-ribosyl)-5-[(5-phospho-beta-D-ribosylamino)methylideneamino]imidazole-4-carboxamide = 5-[(5-phospho-1-deoxy-D-ribulos-1-ylimino)methylamino]-1-(5-phospho-beta-D-ribosyl)imidazole-4-carboxamide. It functions in the pathway amino-acid biosynthesis; L-histidine biosynthesis; L-histidine from 5-phospho-alpha-D-ribose 1-diphosphate: step 4/9. This chain is 1-(5-phosphoribosyl)-5-[(5-phosphoribosylamino)methylideneamino] imidazole-4-carboxamide isomerase, found in Tolumonas auensis (strain DSM 9187 / NBRC 110442 / TA 4).